The following is a 341-amino-acid chain: Uroporphyrinogen decarboxylase (341 aa).

Residues 23 to 27, D73, Y148, S203, and H318 each bind substrate; that span reads RQAGR.

Belongs to the uroporphyrinogen decarboxylase family. In terms of assembly, homodimer.

The protein localises to the cytoplasm. It catalyses the reaction uroporphyrinogen III + 4 H(+) = coproporphyrinogen III + 4 CO2. It functions in the pathway porphyrin-containing compound metabolism; protoporphyrin-IX biosynthesis; coproporphyrinogen-III from 5-aminolevulinate: step 4/4. Its function is as follows. Catalyzes the decarboxylation of four acetate groups of uroporphyrinogen-III to yield coproporphyrinogen-III. This chain is Uroporphyrinogen decarboxylase, found in Brucella ovis (strain ATCC 25840 / 63/290 / NCTC 10512).